The chain runs to 883 residues: Integrator complex subunit 6-A (883 aa).

Residues 3–227 (ILLFLLDTSA…QCLESLVQKV (225 aa)) form the VWFA domain. An Inhibitory loop motif is present at residues 626–633 (MMIDEADE).

It belongs to the Integrator subunit 6 family. In terms of assembly, component of the Integrator complex, composed of core subunits INTS1, INTS2, INTS3, INTS4, INTS5, INTS6, INTS7, INTS8, INTS9/RC74, INTS10, INTS11/CPSF3L, INTS12, INTS13, INTS14 and INTS15. The core complex associates with protein phosphatase 2A subunits PPP2CA and PPP2R1A, to form the Integrator-PP2A (INTAC) complex.

Its subcellular location is the nucleus. It localises to the chromosome. Component of the integrator complex, a multiprotein complex that terminates RNA polymerase II (Pol II) transcription in the promoter-proximal region of genes. The integrator complex provides a quality checkpoint during transcription elongation by driving premature transcription termination of transcripts that are unfavorably configured for transcriptional elongation: the complex terminates transcription by (1) catalyzing dephosphorylation of the C-terminal domain (CTD) of Pol II subunit POLR2A/RPB1 and SUPT5H/SPT5, (2) degrading the exiting nascent RNA transcript via endonuclease activity and (3) promoting the release of Pol II from bound DNA. The integrator complex is also involved in terminating the synthesis of non-coding Pol II transcripts, such as enhancer RNAs (eRNAs), small nuclear RNAs (snRNAs), telomerase RNAs and long non-coding RNAs (lncRNAs). Within the integrator complex, INTS6 acts as a molecular adapter that promotes assembly of protein phosphatase 2A (PP2A) subunits to the integrator core complex, promoting recruitment of PP2A to transcription pause-release checkpoint. In Xenopus laevis (African clawed frog), this protein is Integrator complex subunit 6-A (ints6-a).